Reading from the N-terminus, the 197-residue chain is Large ribosomal subunit protein uL10 (197 aa).

Residues Gly-162–Asn-197 are disordered. Low complexity predominate over residues Gly-163–Asn-197.

It belongs to the universal ribosomal protein uL10 family. In terms of assembly, part of the ribosomal stalk of the 50S ribosomal subunit. The N-terminus interacts with L11 and the large rRNA to form the base of the stalk. The C-terminus forms an elongated spine to which L12 dimers bind in a sequential fashion forming a multimeric L10(L12)X complex.

In terms of biological role, forms part of the ribosomal stalk, playing a central role in the interaction of the ribosome with GTP-bound translation factors. The polypeptide is Large ribosomal subunit protein uL10 (Paenarthrobacter aurescens (strain TC1)).